A 370-amino-acid chain; its full sequence is Queuine tRNA-ribosyltransferase (370 aa).

D93 functions as the Proton acceptor in the catalytic mechanism. Residues 93 to 97 (DSGGF), D147, Q189, and G216 contribute to the substrate site. Positions 247–253 (GVGSPDC) are RNA binding. D266 functions as the Nucleophile in the catalytic mechanism. Residues 271-275 (TRIAR) form an RNA binding; important for wobble base 34 recognition region. Residues C304, C306, C309, and H335 each contribute to the Zn(2+) site.

This sequence belongs to the queuine tRNA-ribosyltransferase family. As to quaternary structure, homodimer. Within each dimer, one monomer is responsible for RNA recognition and catalysis, while the other monomer binds to the replacement base PreQ1. The cofactor is Zn(2+).

The catalysed reaction is 7-aminomethyl-7-carbaguanine + guanosine(34) in tRNA = 7-aminomethyl-7-carbaguanosine(34) in tRNA + guanine. It functions in the pathway tRNA modification; tRNA-queuosine biosynthesis. Catalyzes the base-exchange of a guanine (G) residue with the queuine precursor 7-aminomethyl-7-deazaguanine (PreQ1) at position 34 (anticodon wobble position) in tRNAs with GU(N) anticodons (tRNA-Asp, -Asn, -His and -Tyr). Catalysis occurs through a double-displacement mechanism. The nucleophile active site attacks the C1' of nucleotide 34 to detach the guanine base from the RNA, forming a covalent enzyme-RNA intermediate. The proton acceptor active site deprotonates the incoming PreQ1, allowing a nucleophilic attack on the C1' of the ribose to form the product. After dissociation, two additional enzymatic reactions on the tRNA convert PreQ1 to queuine (Q), resulting in the hypermodified nucleoside queuosine (7-(((4,5-cis-dihydroxy-2-cyclopenten-1-yl)amino)methyl)-7-deazaguanosine). The sequence is that of Queuine tRNA-ribosyltransferase from Pelotomaculum thermopropionicum (strain DSM 13744 / JCM 10971 / SI).